Reading from the N-terminus, the 142-residue chain is Peptide methionine sulfoxide reductase MsrB (142 aa).

Residues 13–135 enclose the MsrB domain; the sequence is EKDWKVELSE…NSLSMTFKGE (123 aa). 4 residues coordinate Zn(2+): Cys52, Cys55, Cys101, and Cys104. Cys124 acts as the Nucleophile in catalysis.

The protein belongs to the MsrB Met sulfoxide reductase family. It depends on Zn(2+) as a cofactor.

It carries out the reaction L-methionyl-[protein] + [thioredoxin]-disulfide + H2O = L-methionyl-(R)-S-oxide-[protein] + [thioredoxin]-dithiol. This is Peptide methionine sulfoxide reductase MsrB from Alteromonas mediterranea (strain DSM 17117 / CIP 110805 / LMG 28347 / Deep ecotype).